Consider the following 286-residue polypeptide: Phosphoribosylaminoimidazole-succinocarboxamide synthase (286 aa).

It belongs to the SAICAR synthetase family.

The enzyme catalyses 5-amino-1-(5-phospho-D-ribosyl)imidazole-4-carboxylate + L-aspartate + ATP = (2S)-2-[5-amino-1-(5-phospho-beta-D-ribosyl)imidazole-4-carboxamido]succinate + ADP + phosphate + 2 H(+). It participates in purine metabolism; IMP biosynthesis via de novo pathway; 5-amino-1-(5-phospho-D-ribosyl)imidazole-4-carboxamide from 5-amino-1-(5-phospho-D-ribosyl)imidazole-4-carboxylate: step 1/2. The polypeptide is Phosphoribosylaminoimidazole-succinocarboxamide synthase (purC) (Pasteurella multocida (strain Pm70)).